The following is a 260-amino-acid chain: tRNA pseudouridine synthase A (260 aa).

Aspartate 51 (nucleophile) is an active-site residue. Tyrosine 109 is a substrate binding site.

It belongs to the tRNA pseudouridine synthase TruA family. In terms of assembly, homodimer.

The enzyme catalyses uridine(38/39/40) in tRNA = pseudouridine(38/39/40) in tRNA. Formation of pseudouridine at positions 38, 39 and 40 in the anticodon stem and loop of transfer RNAs. The protein is tRNA pseudouridine synthase A of Methylibium petroleiphilum (strain ATCC BAA-1232 / LMG 22953 / PM1).